A 90-amino-acid chain; its full sequence is Probable Fe(2+)-trafficking protein (90 aa).

Belongs to the Fe(2+)-trafficking protein family. As to quaternary structure, monomer.

Functionally, could be a mediator in iron transactions between iron acquisition and iron-requiring processes, such as synthesis and/or repair of Fe-S clusters in biosynthetic enzymes. This is Probable Fe(2+)-trafficking protein from Proteus mirabilis (strain HI4320).